Reading from the N-terminus, the 449-residue chain is L10-interacting MYB domain-containing protein (449 aa).

Residues 162–225 enclose the Myb-like domain; it reads SNPQTKGYWS…YTRPQLKNHW (64 aa). A disordered region spans residues 297 to 324; that stretch reads TYTPPSRSRKKLLHNRSESPQWRDTTPL. The segment covering 314–324 has biased composition (polar residues); that stretch reads ESPQWRDTTPL.

Interacts with RPL10A. Expressed in seedlings, leaves, roots, stems and flowers.

The protein resides in the nucleus. Its function is as follows. Transcriptional repressor that associates with ribosomal protein promoters. The chain is L10-interacting MYB domain-containing protein from Arabidopsis thaliana (Mouse-ear cress).